Reading from the N-terminus, the 450-residue chain is Glutamate--tRNA ligase 2 (450 aa).

A 'HIGH' region motif is present at residues 10 to 20; it reads PSPTGFLHIGG. Residues 232–236 carry the 'KMSKS' region motif; the sequence is KLSKR. ATP is bound at residue Lys-235.

This sequence belongs to the class-I aminoacyl-tRNA synthetase family. Glutamate--tRNA ligase type 1 subfamily. In terms of assembly, monomer.

The protein localises to the cytoplasm. The enzyme catalyses tRNA(Glu) + L-glutamate + ATP = L-glutamyl-tRNA(Glu) + AMP + diphosphate. Functionally, catalyzes the attachment of glutamate to tRNA(Glu) in a two-step reaction: glutamate is first activated by ATP to form Glu-AMP and then transferred to the acceptor end of tRNA(Glu). This is Glutamate--tRNA ligase 2 from Wolbachia pipientis subsp. Culex pipiens (strain wPip).